We begin with the raw amino-acid sequence, 95 residues long: MSVSKKDVEYVAELARLEFKEEEKDNFVNDLNKILNYMEKLDELNTDDVDIVVNPYYIENKYREDNVEKSMELKEVIDNAPENLEEYVIVPKVID.

Belongs to the GatC family. As to quaternary structure, heterotrimer of A, B and C subunits.

It carries out the reaction L-glutamyl-tRNA(Gln) + L-glutamine + ATP + H2O = L-glutaminyl-tRNA(Gln) + L-glutamate + ADP + phosphate + H(+). The enzyme catalyses L-aspartyl-tRNA(Asn) + L-glutamine + ATP + H2O = L-asparaginyl-tRNA(Asn) + L-glutamate + ADP + phosphate + 2 H(+). Allows the formation of correctly charged Asn-tRNA(Asn) or Gln-tRNA(Gln) through the transamidation of misacylated Asp-tRNA(Asn) or Glu-tRNA(Gln) in organisms which lack either or both of asparaginyl-tRNA or glutaminyl-tRNA synthetases. The reaction takes place in the presence of glutamine and ATP through an activated phospho-Asp-tRNA(Asn) or phospho-Glu-tRNA(Gln). The chain is Aspartyl/glutamyl-tRNA(Asn/Gln) amidotransferase subunit C from Clostridium botulinum (strain Loch Maree / Type A3).